Here is a 37-residue protein sequence, read N- to C-terminus: Delta/kappa-conotoxin Mo3964 (37 aa).

3 disulfide bridges follow: cysteine 4-cysteine 12, cysteine 11-cysteine 27, and cysteine 21-cysteine 34.

In terms of tissue distribution, expressed by the venom duct.

It localises to the secreted. This toxin reduces the outward currents that are due to the opening of voltage-gated potassium channels in DRG neurons. In addition, leftward shift in the presence of this toxin is observed in averaged normalized conductance-voltage plot of outward sodium currents (Nav1.2/SCN2A). The protein is Delta/kappa-conotoxin Mo3964 of Conus monile (Necklace cone).